The following is a 768-amino-acid chain: Translation initiation factor IF-2, chloroplastic (768 aa).

Disordered stretches follow at residues 1 to 20 (MFLNNQNFENRSSRSSSNIN), 54 to 77 (KSESHTGGEQHLELSSPPKLDKKS), and 155 to 176 (KKVAVTPSQNSASIQSNSPPES). The span at 54–65 (KSESHTGGEQHL) shows a compositional bias: basic and acidic residues. Positions 160–176 (TPSQNSASIQSNSPPES) are enriched in polar residues. Residues 261–434 (KRPPIVTVMG…TLLAELEDLK (174 aa)) form the tr-type G domain. Residues 270-277 (GHVDHGKT), 320-324 (DTPGH), and 374-377 (SKID) each bind GTP.

It belongs to the TRAFAC class translation factor GTPase superfamily. Classic translation factor GTPase family. IF-2 subfamily.

It is found in the plastid. Its subcellular location is the chloroplast. Functionally, one of the essential components for the initiation of protein synthesis. Protects formylmethionyl-tRNA from spontaneous hydrolysis and promotes its binding to the 30S ribosomal subunits. Also involved in the hydrolysis of GTP during the formation of the 70S ribosomal complex. This chain is Translation initiation factor IF-2, chloroplastic (infB), found in Pyropia yezoensis (Susabi-nori).